We begin with the raw amino-acid sequence, 585 residues long: Putative indole-3-acetic acid-amido synthetase GH3.9 (585 aa).

It belongs to the IAA-amido conjugating enzyme family.

Catalyzes the synthesis of indole-3-acetic acid (IAA)-amino acid conjugates, providing a mechanism for the plant to cope with the presence of excess auxin. In Arabidopsis thaliana (Mouse-ear cress), this protein is Putative indole-3-acetic acid-amido synthetase GH3.9 (GH3.9).